The chain runs to 254 residues: 5'-nucleotidase SurE (254 aa).

4 residues coordinate a divalent metal cation: D8, D9, S40, and N93.

It belongs to the SurE nucleotidase family. It depends on a divalent metal cation as a cofactor.

The protein localises to the cytoplasm. The catalysed reaction is a ribonucleoside 5'-phosphate + H2O = a ribonucleoside + phosphate. Its function is as follows. Nucleotidase that shows phosphatase activity on nucleoside 5'-monophosphates. The chain is 5'-nucleotidase SurE from Methylorubrum populi (strain ATCC BAA-705 / NCIMB 13946 / BJ001) (Methylobacterium populi).